A 1209-amino-acid chain; its full sequence is Nitric oxide synthase (1209 aa).

Residue serine 103 participates in (6R)-L-erythro-5,6,7,8-tetrahydrobiopterin binding. A heme b-binding site is contributed by cysteine 181. Glutamine 244, tryptophan 353, tyrosine 354, glutamate 358, and asparagine 363 together coordinate L-arginine. 2 residues coordinate (6R)-L-erythro-5,6,7,8-tetrahydrobiopterin: tryptophan 444 and phenylalanine 457. Residue tyrosine 472 participates in heme b binding. The tract at residues 491-511 is calmodulin-binding; sequence VHRKFHFKQIARAVKFTSKLF. One can recognise a Flavodoxin-like domain in the interval 521–723; it reads ATILYATETG…QFRAWSSKIF (203 aa). 527–531 is an FMN binding site; that stretch reads TETGK. Positions 603–622 are disordered; sequence RGDGTSDLGSGTFKTPTPKS. 669–700 provides a ligand contact to FMN; that stretch reads VFGLGSSAYPKFCHFGKTVDKILGDLGGERIL. Residues 776 to 1021 enclose the FAD-binding FR-type domain; that stretch reads KQLITCKVKE…IRRAPSFHMP (246 aa). FAD-binding positions include 811 to 822 and 954 to 964; these read YDPGDHVGVLAC and LQPRFYSISSS. NADP(+)-binding positions include 1028-1147 and 1128-1143; these read LILV…QQKL and NGHFYVCGDCKMAEEV.

This sequence belongs to the NOS family. Heme b serves as cofactor. The cofactor is FAD. Requires FMN as cofactor. As to expression, constitutively expressed at a low level in the larval fat body, hemocyte, Malpighian tubule, midgut, silk gland and adult antenna.

The enzyme catalyses 2 L-arginine + 3 NADPH + 4 O2 + H(+) = 2 L-citrulline + 2 nitric oxide + 3 NADP(+) + 4 H2O. Its activity is regulated as follows. Expression is dependent on and stimulated by NADPH, calcium, BH4 and calmodulin. The activity is not dependent on FAD and is not stimulated by its presence. Its function is as follows. Produces nitric oxide (NO) which is a messenger molecule with diverse functions throughout the body. Involved in the induction of immune gene expression. This is Nitric oxide synthase from Bombyx mori (Silk moth).